Consider the following 186-residue polypeptide: Pyridoxal 5'-phosphate synthase subunit PdxT (186 aa).

47-49 (GES) contacts L-glutamine. Cys76 (nucleophile) is an active-site residue. Residues Arg102 and 130 to 131 (IR) each bind L-glutamine. Catalysis depends on charge relay system residues His166 and Glu168.

This sequence belongs to the glutaminase PdxT/SNO family. In terms of assembly, in the presence of PdxS, forms a dodecamer of heterodimers. Only shows activity in the heterodimer.

The catalysed reaction is aldehydo-D-ribose 5-phosphate + D-glyceraldehyde 3-phosphate + L-glutamine = pyridoxal 5'-phosphate + L-glutamate + phosphate + 3 H2O + H(+). The enzyme catalyses L-glutamine + H2O = L-glutamate + NH4(+). It participates in cofactor biosynthesis; pyridoxal 5'-phosphate biosynthesis. Catalyzes the hydrolysis of glutamine to glutamate and ammonia as part of the biosynthesis of pyridoxal 5'-phosphate. The resulting ammonia molecule is channeled to the active site of PdxS. The sequence is that of Pyridoxal 5'-phosphate synthase subunit PdxT from Staphylococcus epidermidis (strain ATCC 35984 / DSM 28319 / BCRC 17069 / CCUG 31568 / BM 3577 / RP62A).